The primary structure comprises 132 residues: Galectin-2 (132 aa).

The Galectin domain maps to 4-131 (ELEVKNMDMK…GFNMSSFKLK (128 aa)). 65–71 (WGQEQRE) serves as a coordination point for a beta-D-galactoside.

Homodimer.

This protein binds beta-galactoside. Its physiological function is not yet known. This chain is Galectin-2 (LGALS2), found in Homo sapiens (Human).